Reading from the N-terminus, the 307-residue chain is Ornithine carbamoyltransferase (307 aa).

Carbamoyl phosphate contacts are provided by residues S50–T53, Q77, R101, and H128–Q131. L-ornithine contacts are provided by residues N160, D224, and S228–M229. Carbamoyl phosphate is bound by residues C264–L265 and R292.

Belongs to the aspartate/ornithine carbamoyltransferase superfamily. OTCase family.

It is found in the cytoplasm. It carries out the reaction carbamoyl phosphate + L-ornithine = L-citrulline + phosphate + H(+). Its pathway is amino-acid biosynthesis; L-arginine biosynthesis; L-arginine from L-ornithine and carbamoyl phosphate: step 1/3. With respect to regulation, inhibited by arginine, norvaline. Reversibly catalyzes the transfer of the carbamoyl group from carbamoyl phosphate (CP) to the N(epsilon) atom of ornithine (ORN) to produce L-citrulline, which is a substrate for argininosuccinate synthetase, the enzyme involved in the final step in arginine biosynthesis. This chain is Ornithine carbamoyltransferase, found in Mycolicibacterium smegmatis (strain ATCC 700084 / mc(2)155) (Mycobacterium smegmatis).